A 259-amino-acid polypeptide reads, in one-letter code: 3-deoxy-manno-octulosonate cytidylyltransferase (259 aa).

This sequence belongs to the KdsB family.

The protein resides in the cytoplasm. The catalysed reaction is 3-deoxy-alpha-D-manno-oct-2-ulosonate + CTP = CMP-3-deoxy-beta-D-manno-octulosonate + diphosphate. It functions in the pathway nucleotide-sugar biosynthesis; CMP-3-deoxy-D-manno-octulosonate biosynthesis; CMP-3-deoxy-D-manno-octulosonate from 3-deoxy-D-manno-octulosonate and CTP: step 1/1. Its pathway is bacterial outer membrane biogenesis; lipopolysaccharide biosynthesis. Activates KDO (a required 8-carbon sugar) for incorporation into bacterial lipopolysaccharide in Gram-negative bacteria. The polypeptide is 3-deoxy-manno-octulosonate cytidylyltransferase (Maricaulis maris (strain MCS10) (Caulobacter maris)).